The following is a 939-amino-acid chain: Dynamin-like GTPase MGM1, mitochondrial (939 aa).

A mitochondrion-targeting transit peptide spans 1–27 (MSAQLRAAAAITPAARRVISGPAAVRR). The helical transmembrane segment at 85-103 (FIRVPALFGGMMLGAVGWV) threads the bilayer. A compositionally biased stretch (gly residues) spans 170 to 183 (AGEGSGSGEGGPNG). The tract at residues 170 to 196 (AGEGSGSGEGGPNGGPEPPRQSRAGAA) is disordered. The Dynamin-type G domain maps to 249 to 522 (TVTLPSIVVI…LEQQMSSKLN (274 aa)). Residues 259 to 266 (GSQSSGKS) form a G1 motif region. The GTP site is built by S262, G264, K265, S266, S267, and G281. S266 contributes to the Mg(2+) binding site. Residues 285-287 (ITR) form a G2 motif region. The Mg(2+) site is built by T286 and D359. The segment at 359 to 362 (DLPG) is G3 motif. The G4 motif stretch occupies residues 427 to 430 (TKMD). K428, D430, and S457 together coordinate GTP. A G5 motif region spans residues 456–459 (ISKL). The segment at 549–703 (SAESYLAASL…TSDGIEISLK (155 aa)) is stalk region. The tract at residues 710–809 (DIQPNEWAQG…LSLRIQAAKS (100 aa)) is paddle region. Residues 810-877 (RQCKTLTNKY…GGGLEKFARE (68 aa)) are stalk region. Residues C812 and C821 are joined by a disulfide bond. The GED domain occupies 815–909 (LTNKYYCPEV…KIEELHRISS (95 aa)).

Belongs to the TRAFAC class dynamin-like GTPase superfamily. Dynamin/Fzo/YdjA family. Oligomeric complex consisting of membrane-bound and soluble forms of MGM1. In terms of processing, cleavage of the transit peptide by mitochondrial processing protease (MPP) produces a long integral membrane form of MGM1 (L-MGM1). Further processing by the rhomboid protease PCP1 produces a short peripheral membrane form of MGM1 (S-MGM1). Both forms are required for full activity.

It localises to the mitochondrion inner membrane. The protein localises to the mitochondrion intermembrane space. It carries out the reaction GTP + H2O = GDP + phosphate + H(+). Its function is as follows. Dynamin-related GTPase that is essential for normal mitochondrial morphology by mediating fusion of the mitochondrial inner membranes, regulating cristae morphology and maintaining respiratory chain function. Exists in two forms: the transmembrane, long form (Dynamin-like GTPase MGM1, long form; L-MGM1), which is tethered to the inner mitochondrial membrane, and the short soluble form (Dynamin-like GTPase MGM1, short form; S-MGM1), which results from proteolytic cleavage and localizes in the intermembrane space. Both forms (L-MGM1 and S-MGM1) cooperate to catalyze the fusion of the mitochondrial inner membrane. The equilibrium between L-MGM1 and S-MGM1 is essential: excess levels of S-MGM1, following loss of mitochondrial membrane potential, lead to an impaired equilibrium between L-MGM1 and S-MGM1, inhibiting mitochondrial fusion. Plays a role in the maintenance and remodeling of mitochondrial cristae, some invaginations of the mitochondrial inner membrane that provide an increase in the surface area. Probably acts by forming helical filaments at the inside of inner membrane tubes with the shape and dimensions of crista junctions. Functionally, constitutes the transmembrane long form (L-MGM1) that plays a central role in mitochondrial inner membrane fusion and cristae morphology. L-MGM1 and the soluble short form (S-MGM1) form higher-order helical assemblies that coordinate the fusion of mitochondrial inner membranes. Inner membrane-anchored L-MGM1 molecules initiate membrane remodeling by recruiting soluble S-MGM1 to rapidly polymerize into a flexible cylindrical scaffold encaging the mitochondrial inner membrane. Once at the membrane surface, the formation of S-MGM1 helices induce bilayer curvature. MGM1 dimerization through the paddle region, which inserts into cardiolipin-containing membrane, promotes GTP hydrolysis and the helical assembly of a flexible MGM1 lattice on the membrane, which drives membrane curvature and mitochondrial fusion. Constitutes the soluble short form (S-MGM1) generated by cleavage by PCP1, which plays a central role in mitochondrial inner membrane fusion and cristae morphology. The transmembrane long form (L-MGM1) and the S-MGM1 form higher-order helical assemblies that coordinate the fusion of mitochondrial inner membranes. Inner membrane-anchored L-MGM1 molecules initiate membrane remodeling by recruiting soluble S-MGM1 to rapidly polymerize into a flexible cylindrical scaffold encaging the mitochondrial inner membrane. Once at the membrane surface, the formation of S-MGM1 helices induce bilayer curvature. MGM1 dimerization through the paddle region, which inserts into cardiolipin-containing membrane, promotes GTP hydrolysis and the helical assembly of a flexible MGM1 lattice on the membrane, which drives membrane curvature and mitochondrial fusion. Excess levels of S-MGM1 produced by cleavage by PCP1 following stress conditions that induce loss of mitochondrial membrane potential, lead to an impaired equilibrium between L-MGM1 and S-MGM1, thereby inhibiting mitochondrial fusion. In Chaetomium thermophilum (strain DSM 1495 / CBS 144.50 / IMI 039719) (Thermochaetoides thermophila), this protein is Dynamin-like GTPase MGM1, mitochondrial.